Consider the following 1040-residue polypeptide: Multidrug resistance protein MdtB (1040 aa).

12 helical membrane-spanning segments follow: residues 16-36 (FIMR…AGII), 342-362 (DTQF…YLFL), 369-389 (IIPG…MVFL), 396-416 (LTLM…IVVI), 440-460 (IGFT…PLLF), 472-492 (FAVT…TLTP), 537-557 (WLTL…WVFI), 863-883 (LGST…VLGV), 888-908 (FIHP…ALLA), 911-931 (LAGS…IGIV), 968-988 (ILMT…STGV), and 998-1018 (IGMV…TPVI).

Belongs to the resistance-nodulation-cell division (RND) (TC 2.A.6) family. MdtB subfamily. Part of a tripartite efflux system composed of MdtA, MdtB and MdtC. MdtB forms a heteromultimer with MdtC.

It localises to the cell inner membrane. In Klebsiella pneumoniae (strain 342), this protein is Multidrug resistance protein MdtB.